The primary structure comprises 194 residues: Cupin-domain-containing oxidoreductase virC (194 aa).

Residues 106-175 (IDFAPNVISP…GTLPGRMMWV (70 aa)) enclose the Cupin type-2 domain.

Belongs to the virC family.

The protein operates within secondary metabolite biosynthesis. In terms of biological role, cupin-domain-containing oxidoreductase; part of the gene cluster that mediates the biosynthesis of virensols and trichoxide, fungal natural products that contain or are derived from a salicylaldehyde core. The pathway begins with the synthesis of the reduced chain in virensol C by the highly reducing polyketide synthase virA via condensation of one acetate and 8 malonate units. VirA has interesting programming rules since the first 2 ketides are fully reduced, the 3 following ketides undergo beta-dehydration, and the last 3 ketides are only reduced to beta-hydroxys to yield the trihydroxy portion. The production of aldehyde virensol C by virA alone is surprising, since virA does not contain a reductase (R) domain that is typically associated with reductive product release in HRPKS. The cupin-domain enzyme virC is involved in enhancing virA product turnover. The short-chain dehydrogenase virB then oxidizes the C-7 alcohol of virensol C to a ketone, yielding virensol D. Virensol D is further transformed to salicylaldehyde 5-deoxyaurocitrin by the short-chain dehydrogenase virD. VirD catalyzes the dehydrogenation of C-3 to form the beta-ketone aldehyde, which is followed by the generation of the nucleophilic C-2 that is required for the intramolecular aldol condensation between C-2 and C-7, itself followed by dehydration and aromatization which leads to salicylaldehyde 5-deoxyaurocitrin. While the dehydrogenation of virensol D is definitely catalyzed by virD, the aldol condensation and dehydration may be uncatalyzed or assisted by virD. The short chain dehydrogenase virG then converts salicylaldehyde 5-deoxyaurocitrin into virensol B which is further hydroxylated by the cytochrome P450 monooxygenase virE to yield the hydroquinone virensol A. VirI then may oxidize virensol A to form the quinone, while virH performs the epoxidation. Finally, the two remaining short-chain dehydrogenases, virK and virL, are probably responsible for reducing the ketones to the corresponding alcohols to furnish the epoxycyclohexanol structure in trichoxide. This is Cupin-domain-containing oxidoreductase virC from Hypocrea virens (strain Gv29-8 / FGSC 10586) (Gliocladium virens).